The sequence spans 214 residues: Molybdenum cofactor guanylyltransferase (214 aa).

GTP contacts are provided by residues 18 to 20, Lys31, Asp77, and Asp112; that span reads LAG. Asp112 is a Mg(2+) binding site.

This sequence belongs to the MobA family. As to quaternary structure, monomer. Mg(2+) is required as a cofactor.

The protein resides in the cytoplasm. The enzyme catalyses Mo-molybdopterin + GTP + H(+) = Mo-molybdopterin guanine dinucleotide + diphosphate. Transfers a GMP moiety from GTP to Mo-molybdopterin (Mo-MPT) cofactor (Moco or molybdenum cofactor) to form Mo-molybdopterin guanine dinucleotide (Mo-MGD) cofactor. The protein is Molybdenum cofactor guanylyltransferase of Rhodopseudomonas palustris (strain HaA2).